We begin with the raw amino-acid sequence, 129 residues long: Large ribosomal subunit protein bL12 (129 aa).

It belongs to the bacterial ribosomal protein bL12 family. Homodimer. Part of the ribosomal stalk of the 50S ribosomal subunit. Forms a multimeric L10(L12)X complex, where L10 forms an elongated spine to which 2 to 4 L12 dimers bind in a sequential fashion. Binds GTP-bound translation factors.

Forms part of the ribosomal stalk which helps the ribosome interact with GTP-bound translation factors. Is thus essential for accurate translation. The chain is Large ribosomal subunit protein bL12 from Mycobacteroides abscessus (strain ATCC 19977 / DSM 44196 / CCUG 20993 / CIP 104536 / JCM 13569 / NCTC 13031 / TMC 1543 / L948) (Mycobacterium abscessus).